Here is a 359-residue protein sequence, read N- to C-terminus: Pyruvate dehydrogenase E1 component subunit beta, mitochondrial (359 aa).

The N-terminal 30 residues, 1 to 30 (MAVVAVLVRKPLEQVSGLLRRRFHRTAPAA), are a transit peptide targeting the mitochondrion. Tyrosine 67 bears the Phosphotyrosine mark. Glutamate 89 provides a ligand contact to thiamine diphosphate. K(+) is bound by residues isoleucine 142, alanine 190, isoleucine 191, aspartate 193, and asparagine 195. Lysine 354 bears the N6-acetyllysine mark.

In terms of assembly, heterotetramer of two PDHA1 and two PDHB subunits. The heterotetramer interacts with DLAT, and is part of the multimeric pyruvate dehydrogenase complex that contains multiple copies of pyruvate dehydrogenase (E1), dihydrolipoamide acetyltransferase (DLAT, E2) and lipoamide dehydrogenase (DLD, E3). These subunits are bound to an inner core composed of about 48 DLAT and 12 PDHX molecules. Interacts with DLAT. It depends on thiamine diphosphate as a cofactor.

It is found in the mitochondrion matrix. It catalyses the reaction N(6)-[(R)-lipoyl]-L-lysyl-[protein] + pyruvate + H(+) = N(6)-[(R)-S(8)-acetyldihydrolipoyl]-L-lysyl-[protein] + CO2. Its function is as follows. The pyruvate dehydrogenase complex catalyzes the overall conversion of pyruvate to acetyl-CoA and CO(2), and thereby links the glycolytic pathway to the tricarboxylic cycle. This Bos taurus (Bovine) protein is Pyruvate dehydrogenase E1 component subunit beta, mitochondrial (PDHB).